The sequence spans 173 residues: Putative metal-dependent hydrolase BCG9842_B2589 (173 aa).

Residues His65, His156, and His160 each coordinate Zn(2+).

Belongs to the metal hydrolase YfiT family. In terms of assembly, homodimer. Zn(2+) serves as cofactor.

The protein resides in the cytoplasm. Possible metal-dependent hydrolase. This Bacillus cereus (strain G9842) protein is Putative metal-dependent hydrolase BCG9842_B2589.